The primary structure comprises 370 residues: Histidinol-phosphate aminotransferase 3 (370 aa).

K229 carries the post-translational modification N6-(pyridoxal phosphate)lysine.

The protein belongs to the class-II pyridoxal-phosphate-dependent aminotransferase family. Histidinol-phosphate aminotransferase subfamily. In terms of assembly, homodimer. Pyridoxal 5'-phosphate serves as cofactor.

The catalysed reaction is L-histidinol phosphate + 2-oxoglutarate = 3-(imidazol-4-yl)-2-oxopropyl phosphate + L-glutamate. It functions in the pathway amino-acid biosynthesis; L-histidine biosynthesis; L-histidine from 5-phospho-alpha-D-ribose 1-diphosphate: step 7/9. The chain is Histidinol-phosphate aminotransferase 3 (hisC3) from Rhizobium meliloti (strain 1021) (Ensifer meliloti).